A 150-amino-acid polypeptide reads, in one-letter code: Leukotriene C4 synthase (150 aa).

Over 1–6 the chain is Cytoplasmic; sequence MKDEVA. Residues 7 to 27 traverse the membrane as a helical segment; that stretch reads LLATVTLLGVLLQAYFSLQVI. The Lumenal portion of the chain corresponds to 28-48; sequence RARRAHRVSPPLTTGPPEFER. Arginine 30 lines the glutathione pocket. Arginine 31 (proton donor) is an active-site residue. Serine 36 bears the Phosphoserine mark. Residues 49 to 69 form a helical membrane-spanning segment; the sequence is VYRAQVNCSEYFPLFLATLWV. Residues 51 to 55 and 58 to 59 each bind glutathione; these read RAQVN and EY. The Cytoplasmic segment spans residues 70–73; it reads AGVY. The helical transmembrane segment at 74 to 94 threads the bilayer; sequence FHEGAAALCGLVYLFTRLRYF. 93-97 contributes to the glutathione binding site; the sequence is YFWGY. Topologically, residues 95 to 104 are lumenal; sequence WGYARSAQLR. Arginine 104 functions as the Proton acceptor in the catalytic mechanism. A helical membrane pass occupies residues 105–124; sequence LAPLYASARALWLLLALATL. The Cytoplasmic portion of the chain corresponds to 125–150; the sequence is GLLAHFLPAAARAALLRLLRALLRTA.

The protein belongs to the MAPEG family. Homotrimer. Interacts with ALOX5AP and ALOX5. Post-translationally, phosphorylation at Ser-36 by RPS6KB1 inhibits the leukotriene-C4 synthase activity.

The protein resides in the nucleus outer membrane. It localises to the endoplasmic reticulum membrane. Its subcellular location is the nucleus membrane. It catalyses the reaction leukotriene C4 = leukotriene A4 + glutathione. It carries out the reaction (13S,14S)-epoxy-(4Z,7Z,9E,11E,16Z,19Z)-docosahexaenoate + glutathione = (13R)-S-glutathionyl-(14S)-hydroxy-(4Z,7Z,9E,11E,16Z,19Z)-docosahexaenoate. The protein operates within lipid metabolism; leukotriene C4 biosynthesis. With respect to regulation, inhibited by MK886. In terms of biological role, catalyzes the conjugation of leukotriene A4 with reduced glutathione (GSH) to form leukotriene C4 with high specificity. Can also catalyze the transfer of a glutathionyl group from glutathione (GSH) to 13(S),14(S)-epoxy-docosahexaenoic acid to form maresin conjugate in tissue regeneration 1 (MCTR1), a bioactive lipid mediator that possess potent anti-inflammatory and proresolving actions. In Cavia porcellus (Guinea pig), this protein is Leukotriene C4 synthase (LTC4S).